The sequence spans 352 residues: Biotin synthase (352 aa).

The region spanning 44-262 (NRVQVSTLLS…LAVARIMMPK (219 aa)) is the Radical SAM core domain. Residues cysteine 59, cysteine 63, and cysteine 66 each contribute to the [4Fe-4S] cluster site. [2Fe-2S] cluster contacts are provided by cysteine 103, cysteine 134, cysteine 194, and arginine 266.

It belongs to the radical SAM superfamily. Biotin synthase family. Homodimer. The cofactor is [4Fe-4S] cluster. [2Fe-2S] cluster serves as cofactor.

The enzyme catalyses (4R,5S)-dethiobiotin + (sulfur carrier)-SH + 2 reduced [2Fe-2S]-[ferredoxin] + 2 S-adenosyl-L-methionine = (sulfur carrier)-H + biotin + 2 5'-deoxyadenosine + 2 L-methionine + 2 oxidized [2Fe-2S]-[ferredoxin]. The protein operates within cofactor biosynthesis; biotin biosynthesis; biotin from 7,8-diaminononanoate: step 2/2. Functionally, catalyzes the conversion of dethiobiotin (DTB) to biotin by the insertion of a sulfur atom into dethiobiotin via a radical-based mechanism. The sequence is that of Biotin synthase from Pseudomonas paraeruginosa (strain DSM 24068 / PA7) (Pseudomonas aeruginosa (strain PA7)).